Reading from the N-terminus, the 392-residue chain is MDYYTILGVAKTATPEEIKKAYRKLAVKYHPDKNPGDAEAERRFKEVSEAYEVLGDAQKRESYDRYGKDGPFAGAGGFGGAGMGNMEDALRTFMGAFGGDFGGNGGGFFEGLFGGLGEAFGMRGGSESSRQGASKKVHITLSFEEAAKGVEKELLVSGYKSCDACSGSGANTAKGVKVCDRCKGSGQVVQSRGFFSMASTCPDCSGEGRVITDPCSVCRGQGRIKDKRSVHVNIPAGVDSGMRLKMEGYGDAGQNGAPAGDLYVFIDVEPHPVFERHGDDLVLELPIGFVDAALGIKKEIPTLLKEGTCRLSIPEGIQSGTVLKVRGQGFPNVHGKSRGDLLVRVSVETPQHLSNEQKDLLRQFAATEKAENFPKKRSFLDKIKGFFSDFAV.

The region spanning 2–67 (DYYTILGVAK…QKRESYDRYG (66 aa)) is the J domain. Residues 149–227 (GVEKELLVSG…CRGQGRIKDK (79 aa)) form a CR-type zinc finger. Zn(2+)-binding residues include C162, C165, C179, C182, C201, C204, C215, and C218. CXXCXGXG motif repeat units follow at residues 162-169 (CDACSGSG), 179-186 (CDRCKGSG), 201-208 (CPDCSGEG), and 215-222 (CSVCRGQG).

This sequence belongs to the DnaJ family. Homodimer. Zn(2+) serves as cofactor.

It localises to the cytoplasm. In terms of biological role, participates actively in the response to hyperosmotic and heat shock by preventing the aggregation of stress-denatured proteins and by disaggregating proteins, also in an autonomous, DnaK-independent fashion. Unfolded proteins bind initially to DnaJ; upon interaction with the DnaJ-bound protein, DnaK hydrolyzes its bound ATP, resulting in the formation of a stable complex. GrpE releases ADP from DnaK; ATP binding to DnaK triggers the release of the substrate protein, thus completing the reaction cycle. Several rounds of ATP-dependent interactions between DnaJ, DnaK and GrpE are required for fully efficient folding. Also involved, together with DnaK and GrpE, in the DNA replication of plasmids through activation of initiation proteins. This Chlamydia trachomatis serovar L2 (strain ATCC VR-902B / DSM 19102 / 434/Bu) protein is Chaperone protein DnaJ.